The chain runs to 226 residues: Putative methyltransferase RP459 (226 aa).

Belongs to the methyltransferase superfamily.

In Rickettsia prowazekii (strain Madrid E), this protein is Putative methyltransferase RP459.